Reading from the N-terminus, the 243-residue chain is Uridylate kinase (243 aa).

15 to 18 (KLSG) contacts ATP. A UMP-binding site is contributed by Gly-56. Positions 57 and 61 each coordinate ATP. Residue 138–145 (TGNPYFST) coordinates UMP. Residues Asn-166, Tyr-172, and Asp-175 each coordinate ATP.

Belongs to the UMP kinase family. As to quaternary structure, homohexamer.

The protein resides in the cytoplasm. It catalyses the reaction UMP + ATP = UDP + ADP. It functions in the pathway pyrimidine metabolism; CTP biosynthesis via de novo pathway; UDP from UMP (UMPK route): step 1/1. Its activity is regulated as follows. Inhibited by UTP. Catalyzes the reversible phosphorylation of UMP to UDP. In Mycoplasma genitalium (strain ATCC 33530 / DSM 19775 / NCTC 10195 / G37) (Mycoplasmoides genitalium), this protein is Uridylate kinase.